Consider the following 241-residue polypeptide: GDSL esterase/lipase At5g45920 (241 aa).

Catalysis depends on serine 12, which acts as the Nucleophile. Active-site residues include aspartate 189 and histidine 192.

This sequence belongs to the 'GDSL' lipolytic enzyme family.

In Arabidopsis thaliana (Mouse-ear cress), this protein is GDSL esterase/lipase At5g45920.